The sequence spans 396 residues: Chalcone synthase (396 aa).

The active site involves Cys-169.

The protein belongs to the thiolase-like superfamily. Chalcone/stilbene synthases family.

It catalyses the reaction (E)-4-coumaroyl-CoA + 3 malonyl-CoA + 3 H(+) = 2',4,4',6'-tetrahydroxychalcone + 3 CO2 + 4 CoA. The protein operates within secondary metabolite biosynthesis; flavonoid biosynthesis. The primary product of this enzyme is 4,2',4',6'-tetrahydroxychalcone (also termed naringenin-chalcone or chalcone) which can under specific conditions spontaneously isomerize into naringenin. The polypeptide is Chalcone synthase (CHS) (Pinus sylvestris (Scotch pine)).